Consider the following 219-residue polypeptide: HTH-type transcriptional activator FasR (219 aa).

A disordered region spans residues 1 to 30; sequence MSDLANTAERRGEKRPAGGNRRGNRLPRDE. One can recognise an HTH tetR-type domain in the interval 29 to 89; the sequence is DERRGQLLIA…AVLQRHVDNL (61 aa). The H-T-H motif DNA-binding region spans 52 to 71; the sequence is GMDEIADRAGVSKPVLYQHF.

Homodimer.

Its activity is regulated as follows. FasR:DNA binding is regulated by long-chain acyl-CoAs (C14- to C26-CoA), which act as effector molecules that modulate the affinity of FasR for its DNA binding sequences and therefore modulate the expression of the essential fas-acpS operon. Transcriptional activator that plays a central role in sensing mycobacterial long-chain fatty acids and regulating lipid biosynthesis. Activates the expression of the genes encoding the fatty acid synthase (fas) and the 4-phosphopantetheinyl transferase (acpS), whose products are involved in the fatty acid and mycolic acid biosynthesis. Specifically binds to three conserved operator sequences present in the fas-acpS promoter region. Essential for M.smegmatis viability. The protein is HTH-type transcriptional activator FasR of Mycolicibacterium smegmatis (strain ATCC 700084 / mc(2)155) (Mycobacterium smegmatis).